A 579-amino-acid polypeptide reads, in one-letter code: Arginine--tRNA ligase (579 aa).

A 'HIGH' region motif is present at residues 127-137 (PNLAKEMHVGH).

The protein belongs to the class-I aminoacyl-tRNA synthetase family. Monomer.

It is found in the cytoplasm. The enzyme catalyses tRNA(Arg) + L-arginine + ATP = L-arginyl-tRNA(Arg) + AMP + diphosphate. The polypeptide is Arginine--tRNA ligase (Azotobacter vinelandii (strain DJ / ATCC BAA-1303)).